Consider the following 514-residue polypeptide: Prespore vesicle protein (514 aa).

Residues 1-18 (MRLYLLSLILVFYASVSS) form the signal peptide. Follistatin-like domains lie at 40-62 (LCGTHYCPPGSTCESKHGHYICR) and 240-262 (TCETKKCEASQVCIMVNGDAQCI). The span at 285–297 (QRNAKPAQQQRSA) shows a compositional bias: polar residues. Residues 285 to 514 (QRNAKPAQQQ…QARPATQKRN (230 aa)) form a disordered region. Low complexity-rich tracts occupy residues 328–391 (QHNA…HTAA), 398–413 (AAQQHAKPAAHGAKPA), and 424–457 (AAQQHAKPAAHTAAKPVQHNAAQQHAKPAAKPAK). The span at 480-508 (RIRQQNLVKQAAQKKQTSQRAASKNQARP) shows a compositional bias: polar residues.

This is Prespore vesicle protein (psvA) from Dictyostelium discoideum (Social amoeba).